We begin with the raw amino-acid sequence, 215 residues long: Cytochrome b6 (215 aa).

Residues 32–52 (IFYCLGGITLVCFLIQFATGF) form a helical membrane-spanning segment. C35 is a heme c binding site. Residues H86 and H100 each contribute to the heme b site. 3 helical membrane passes run 90-110 (ASMM…TGGF), 116-136 (LTWV…VTGY), and 186-206 (AHTF…FLMI). The heme b site is built by H187 and H202.

It belongs to the cytochrome b family. PetB subfamily. In terms of assembly, the 4 large subunits of the cytochrome b6-f complex are cytochrome b6, subunit IV (17 kDa polypeptide, PetD), cytochrome f and the Rieske protein, while the 4 small subunits are PetG, PetL, PetM and PetN. The complex functions as a dimer. Heme b serves as cofactor. Requires heme c as cofactor.

It localises to the cellular thylakoid membrane. Functionally, component of the cytochrome b6-f complex, which mediates electron transfer between photosystem II (PSII) and photosystem I (PSI), cyclic electron flow around PSI, and state transitions. This Nostoc punctiforme (strain ATCC 29133 / PCC 73102) protein is Cytochrome b6.